A 175-amino-acid polypeptide reads, in one-letter code: E1B protein, small T-antigen (175 aa).

A disordered region spans residues 153–175 (LAEEDEDEEGTTLTTEAEQESSA).

This sequence belongs to the adenoviridae E1B 19 kDa protein family.

This Mus musculus (Mouse) protein is E1B protein, small T-antigen.